The chain runs to 426 residues: Glutamate-1-semialdehyde 2,1-aminomutase (426 aa).

K265 bears the N6-(pyridoxal phosphate)lysine mark.

This sequence belongs to the class-III pyridoxal-phosphate-dependent aminotransferase family. HemL subfamily. Homodimer. Pyridoxal 5'-phosphate serves as cofactor.

The protein localises to the cytoplasm. It catalyses the reaction (S)-4-amino-5-oxopentanoate = 5-aminolevulinate. The protein operates within porphyrin-containing compound metabolism; protoporphyrin-IX biosynthesis; 5-aminolevulinate from L-glutamyl-tRNA(Glu): step 2/2. The sequence is that of Glutamate-1-semialdehyde 2,1-aminomutase from Cronobacter sakazakii (strain ATCC BAA-894) (Enterobacter sakazakii).